Reading from the N-terminus, the 43-residue chain is Lanthionine-containing peptide SapB (43 aa).

The first 21 residues, 1 to 21, serve as a signal peptide directing secretion; it reads MALLDLQAMDTPAEDSFGELA. 2 consecutive cross-links (lanthionine (Ser-Cys)) follow at residues 24–31 and 34–41; these read SQVSLLVC and SSLSVVLC. A 2,3-didehydroalanine (Ser) mark is found at Ser-27 and Ser-37.

Belongs to the lanthionine-containing morphogen protein family. Maturation involves the enzymatic conversion of Ser into dehydrated AA and the formation of thioether bonds with cysteine. This is followed by membrane translocation and cleavage of the modified precursor.

Its function is as follows. Lanthionine-containing peptide devoid of antibiotic properties, involved in the formation of aerial mycelium. Suggested to self-assemble at air-water interfaces, thus providing a film of surfactant through which nascent aerial hyphae can emerge. The aerial hyphae differentiate further into spores. The sequence is that of Lanthionine-containing peptide SapB (ramS) from Streptomyces griseus subsp. griseus (strain JCM 4626 / CBS 651.72 / NBRC 13350 / KCC S-0626 / ISP 5235).